The primary structure comprises 238 residues: Probable transcriptional regulatory protein Mmwyl1_2868 (238 aa).

It belongs to the TACO1 family.

It is found in the cytoplasm. The sequence is that of Probable transcriptional regulatory protein Mmwyl1_2868 from Marinomonas sp. (strain MWYL1).